We begin with the raw amino-acid sequence, 315 residues long: uncharacterized protein (315 aa).

A run of 3 helical transmembrane segments spans residues 18 to 38 (IWFI…IISG), 202 to 222 (ILAI…LAGI), and 244 to 264 (LIYA…VIVL). The interval 288–315 (VCSTGNRSSGSTDQDISTTKQQSQEAVA) is disordered.

Its subcellular location is the membrane. This is an uncharacterized protein from Saccharomyces cerevisiae (strain ATCC 204508 / S288c) (Baker's yeast).